The sequence spans 80 residues: U4-theraphotoxin-Spl1a (80 aa).

The N-terminal stretch at 1–21 (MKASLFAVIFGLVVLCACSFA) is a signal peptide. The propeptide occupies 22–50 (EDQFASPNELLKSMFVESTHELTPEVEGR). 3 disulfides stabilise this stretch: Cys52-Cys66, Cys59-Cys71, and Cys65-Cys75. Residue Leu79 is modified to Leucine amide.

This sequence belongs to the neurotoxin 30 (phrixotoxin) family. In terms of tissue distribution, expressed by the venom gland.

It is found in the secreted. Functionally, probable ion channel inhibitor. Shows insecticidal activity when injected into mealworms. This chain is U4-theraphotoxin-Spl1a, found in Selenotypus plumipes (Australian featherleg tarantula).